A 267-amino-acid polypeptide reads, in one-letter code: Probable tetrahydroxynaphthalene reductase MYCGRDRAFT_87994 (267 aa).

Ile26, Asp72, Asn99, and Arg132 together coordinate NADP(+). Ser149 serves as the catalytic Proton donor. Positions 163, 167, 196, and 198 each coordinate NADP(+). Tyr163 (proton acceptor) is an active-site residue. The Lowers pKa of active site Tyr role is filled by Lys167.

This sequence belongs to the short-chain dehydrogenases/reductases (SDR) family. In terms of assembly, homotetramer.

The catalysed reaction is scytalone + NADP(+) = naphthalene-1,3,6,8-tetrol + NADPH + H(+). The protein operates within pigment biosynthesis; melanin biosynthesis. Probable tetrahydroxynaphthalene reductase; part of the gene cluster 29 that mediates the biosynthesis dihydroxynaphthalene (DHN)-melanin, a bluish-green pigment and a structural component of the conidial wall. Catalyzes the NADPH-dependent reduction of 1,3,6,8-tetrahydroxynaphthalene (T4HN) into (+)-scytalone. The chain is Probable tetrahydroxynaphthalene reductase MYCGRDRAFT_87994 from Zymoseptoria tritici (strain CBS 115943 / IPO323) (Speckled leaf blotch fungus).